Reading from the N-terminus, the 522-residue chain is Glutamate--cysteine ligase (522 aa).

This sequence belongs to the glutamate--cysteine ligase type 1 family. Type 1 subfamily.

The catalysed reaction is L-cysteine + L-glutamate + ATP = gamma-L-glutamyl-L-cysteine + ADP + phosphate + H(+). The protein operates within sulfur metabolism; glutathione biosynthesis; glutathione from L-cysteine and L-glutamate: step 1/2. The chain is Glutamate--cysteine ligase from Shewanella halifaxensis (strain HAW-EB4).